The sequence spans 181 residues: uncharacterized protein (181 aa).

This is an uncharacterized protein from Enterobacteria phage T4 (Bacteriophage T4).